A 200-amino-acid polypeptide reads, in one-letter code: Putative hydrolase MhqD (200 aa).

Active-site charge relay system residues include S100, D150, and H181.

Belongs to the AB hydrolase superfamily. AB hydrolase 2 family.

It localises to the cytoplasm. Its function is as follows. Putative hydrolase that may contribute to the degradation of aromatic compounds. The protein is Putative hydrolase MhqD (mhqD) of Bacillus subtilis (strain 168).